We begin with the raw amino-acid sequence, 74 residues long: Protein SlyX homolog (74 aa).

This sequence belongs to the SlyX family.

The chain is Protein SlyX homolog from Aliivibrio fischeri (strain ATCC 700601 / ES114) (Vibrio fischeri).